Reading from the N-terminus, the 192-residue chain is Peptidyl-tRNA hydrolase (192 aa).

Tyr-16 is a tRNA binding site. Residue His-21 is the Proton acceptor of the active site. The tRNA site is built by Tyr-66 and Asn-68.

It belongs to the PTH family. In terms of assembly, monomer.

The protein localises to the cytoplasm. The enzyme catalyses an N-acyl-L-alpha-aminoacyl-tRNA + H2O = an N-acyl-L-amino acid + a tRNA + H(+). Functionally, hydrolyzes ribosome-free peptidyl-tRNAs (with 1 or more amino acids incorporated), which drop off the ribosome during protein synthesis, or as a result of ribosome stalling. Catalyzes the release of premature peptidyl moieties from peptidyl-tRNA molecules trapped in stalled 50S ribosomal subunits, and thus maintains levels of free tRNAs and 50S ribosomes. The protein is Peptidyl-tRNA hydrolase of Aquifex aeolicus (strain VF5).